Reading from the N-terminus, the 466-residue chain is GTPase Der (466 aa).

2 EngA-type G domains span residues 3–166 and 177–350; these read PVIA…PEIP and IKIA…QSAT. Residues 9 to 16, 56 to 60, 118 to 121, 183 to 190, 230 to 234, and 295 to 298 contribute to the GTP site; these read GRPNVGKS, DTGGI, NKID, DTAGV, and NKWD. The region spanning 351–435 is the KH-like domain; the sequence is DRFSTNYLTR…PIRIEFRTTD (85 aa). A disordered region spans residues 442–466; it reads KKSMTRQQFIQKRRKEERDRNNPRR. Residues 455–466 are compositionally biased toward basic and acidic residues; sequence RKEERDRNNPRR.

Belongs to the TRAFAC class TrmE-Era-EngA-EngB-Septin-like GTPase superfamily. EngA (Der) GTPase family. In terms of assembly, associates with the 50S ribosomal subunit.

Functionally, GTPase that plays an essential role in the late steps of ribosome biogenesis. This chain is GTPase Der, found in Cellvibrio japonicus (strain Ueda107) (Pseudomonas fluorescens subsp. cellulosa).